The following is a 180-amino-acid chain: MSRVGRLPIAIPADVTVTVTPDNLVTVKGPKGELVKTMHKDISIAVENNEVIVTRHSEQKDHRALHGLTRALINNMVIGVKQGYQKTLDLVGVGYRAQLQGKKLVMNLGYSHPVEIEPIDGITFETPAATRVIVSGIDKEKVGFAAADIRKWRVPEPYKGKGIKYENEVIRRKEGKTGKK.

The protein belongs to the universal ribosomal protein uL6 family. As to quaternary structure, part of the 50S ribosomal subunit.

This protein binds to the 23S rRNA, and is important in its secondary structure. It is located near the subunit interface in the base of the L7/L12 stalk, and near the tRNA binding site of the peptidyltransferase center. The polypeptide is Large ribosomal subunit protein uL6 (Clostridium beijerinckii (strain ATCC 51743 / NCIMB 8052) (Clostridium acetobutylicum)).